Here is a 95-residue protein sequence, read N- to C-terminus: Small ribosomal subunit protein uS17 (95 aa).

It belongs to the universal ribosomal protein uS17 family. Part of the 30S ribosomal subunit.

One of the primary rRNA binding proteins, it binds specifically to the 5'-end of 16S ribosomal RNA. This chain is Small ribosomal subunit protein uS17, found in Synechococcus sp. (strain CC9902).